A 150-amino-acid chain; its full sequence is Histone deacetylase complex subunit SAP18 (150 aa).

The protein belongs to the SAP18 family. Forms a complex with SIN3 and histone deacetylase. Interacts with the N-terminal residues of TRL. Interacts with BCD; in vitro and yeast cells.

It is found in the nucleus. It localises to the cytoplasm. Its function is as follows. Involved in the tethering of the SIN3 complex to core histone proteins. Interacts with bicoid (bcd) to repress transcription of bicoid target genes in the anterior tip of the embryo; a process known as retraction. Interacts with Trl and binds to Polycomb response elements at the bithorax complex. May contribute to the regulation of other homeotic gene expressions. The protein is Histone deacetylase complex subunit SAP18 (Bin1) of Drosophila melanogaster (Fruit fly).